Reading from the N-terminus, the 226-residue chain is Putative ABC transporter ATP-binding protein BH02760 (226 aa).

The ABC transporter domain occupies 4–222 (IKFDKVTQVF…IPLVAIKEYI (219 aa)). 35 to 42 (GANGSGKS) lines the ATP pocket.

This sequence belongs to the ABC transporter superfamily.

It is found in the cell inner membrane. In terms of biological role, probably part of an ABC transporter complex. Responsible for energy coupling to the transport system. This is Putative ABC transporter ATP-binding protein BH02760 from Bartonella henselae (strain ATCC 49882 / DSM 28221 / CCUG 30454 / Houston 1) (Rochalimaea henselae).